The sequence spans 367 residues: Heme A synthase (367 aa).

5 consecutive transmembrane segments (helical) span residues 26–46 (IRGW…VGGA), 111–131 (LLAR…WLTG), 139–159 (LPLL…WWMV), 174–194 (LATH…IYRG), and 212–232 (AGII…VAGL). H274 serves as a coordination point for heme. The next 3 membrane-spanning stretches (helical) occupy residues 276–296 (AGAY…LRAA), 305–325 (SVLL…TLLL), and 327–347 (VPIV…GFAI). Position 335 (H335) interacts with heme.

It belongs to the COX15/CtaA family. Type 2 subfamily. As to quaternary structure, interacts with CtaB. Requires heme b as cofactor.

The protein resides in the cell membrane. The catalysed reaction is Fe(II)-heme o + 2 A + H2O = Fe(II)-heme a + 2 AH2. Its pathway is porphyrin-containing compound metabolism; heme A biosynthesis; heme A from heme O: step 1/1. Its function is as follows. Catalyzes the conversion of heme O to heme A by two successive hydroxylations of the methyl group at C8. The first hydroxylation forms heme I, the second hydroxylation results in an unstable dihydroxymethyl group, which spontaneously dehydrates, resulting in the formyl group of heme A. The protein is Heme A synthase of Sinorhizobium fredii (strain NBRC 101917 / NGR234).